A 728-amino-acid chain; its full sequence is Methionine--tRNA ligase (728 aa).

The 'HIGH' region signature appears at 13–23 (PYANGSIHLGH). Residues Cys-144, Cys-147, Cys-157, and Cys-160 each coordinate Zn(2+). The short motif at 348-352 (KMSKS) is the 'KMSKS' region element. Residue Lys-351 coordinates ATP. Residues 585-620 (LAPAKSQQVAQAVETMEKNSSTTPAPAKEGEAGQAS) are disordered. In terms of domain architecture, tRNA-binding spans 628–728 (DFGKIDLRVA…EGARPGMKVK (101 aa)).

It belongs to the class-I aminoacyl-tRNA synthetase family. MetG type 1 subfamily. In terms of assembly, homodimer. Zn(2+) serves as cofactor.

The protein localises to the cytoplasm. It carries out the reaction tRNA(Met) + L-methionine + ATP = L-methionyl-tRNA(Met) + AMP + diphosphate. Is required not only for elongation of protein synthesis but also for the initiation of all mRNA translation through initiator tRNA(fMet) aminoacylation. The polypeptide is Methionine--tRNA ligase (Nitrosospira multiformis (strain ATCC 25196 / NCIMB 11849 / C 71)).